Reading from the N-terminus, the 349-residue chain is Ribosomal RNA large subunit methyltransferase M (349 aa).

S-adenosyl-L-methionine is bound by residues 216–219 (APGG), D235, D255, and D271. K300 (proton acceptor) is an active-site residue.

Belongs to the class I-like SAM-binding methyltransferase superfamily. RNA methyltransferase RlmE family. RlmM subfamily. In terms of assembly, monomer.

The protein localises to the cytoplasm. The enzyme catalyses cytidine(2498) in 23S rRNA + S-adenosyl-L-methionine = 2'-O-methylcytidine(2498) in 23S rRNA + S-adenosyl-L-homocysteine + H(+). In terms of biological role, catalyzes the 2'-O-methylation at nucleotide C2498 in 23S rRNA. This Saccharophagus degradans (strain 2-40 / ATCC 43961 / DSM 17024) protein is Ribosomal RNA large subunit methyltransferase M.